Here is a 145-residue protein sequence, read N- to C-terminus: MDLNFDLYMNGVVEQARNEIENAGYEQLTTADEVDKVLQQNGTSLVMVNSVCGCAGGIARPAASHALHYDKLPDRLVTVFAGQDKEATQQARDYFEGYAPSSPSFALIKDGKITEMIERHQIEGHDVMDVINQLQGLFDKYCDER.

It belongs to the bacilliredoxin family.

In Staphylococcus haemolyticus (strain JCSC1435), this protein is Bacilliredoxin SH1401.